The sequence spans 175 residues: ATP synthase subunit b (175 aa).

Residues 23–43 (TGITFLVLLFVLGKFAWGPIV) traverse the membrane as a helical segment.

The protein belongs to the ATPase B chain family. F-type ATPases have 2 components, F(1) - the catalytic core - and F(0) - the membrane proton channel. F(1) has five subunits: alpha(3), beta(3), gamma(1), delta(1), epsilon(1). F(0) has three main subunits: a(1), b(2) and c(10-14). The alpha and beta chains form an alternating ring which encloses part of the gamma chain. F(1) is attached to F(0) by a central stalk formed by the gamma and epsilon chains, while a peripheral stalk is formed by the delta and b chains.

It localises to the cell inner membrane. Functionally, f(1)F(0) ATP synthase produces ATP from ADP in the presence of a proton or sodium gradient. F-type ATPases consist of two structural domains, F(1) containing the extramembraneous catalytic core and F(0) containing the membrane proton channel, linked together by a central stalk and a peripheral stalk. During catalysis, ATP synthesis in the catalytic domain of F(1) is coupled via a rotary mechanism of the central stalk subunits to proton translocation. Its function is as follows. Component of the F(0) channel, it forms part of the peripheral stalk, linking F(1) to F(0). The protein is ATP synthase subunit b of Anaeromyxobacter sp. (strain Fw109-5).